The primary structure comprises 241 residues: tRNA pseudouridine synthase B (241 aa).

The active-site Nucleophile is the Asp-45.

It belongs to the pseudouridine synthase TruB family. Type 1 subfamily.

It carries out the reaction uridine(55) in tRNA = pseudouridine(55) in tRNA. Functionally, responsible for synthesis of pseudouridine from uracil-55 in the psi GC loop of transfer RNAs. The sequence is that of tRNA pseudouridine synthase B from Chlamydia muridarum (strain MoPn / Nigg).